The primary structure comprises 67 residues: DNA-directed RNA polymerases I, II, and III subunit RPABC5 (67 aa).

Zn(2+) is bound by residues C7, C10, C44, and C45.

The protein belongs to the archaeal Rpo10/eukaryotic RPB10 RNA polymerase subunit family. As to quaternary structure, component of the RNA polymerase I (Pol I), RNA polymerase II (Pol II) and RNA polymerase III (Pol III) complexes consisting of at least 13, 12 and 17 subunits, respectively.

The protein resides in the nucleus. In terms of biological role, DNA-dependent RNA polymerase catalyzes the transcription of DNA into RNA using the four ribonucleoside triphosphates as substrates. Common component of RNA polymerases I, II and III which synthesize ribosomal RNA precursors, mRNA precursors and many functional non-coding RNAs, and a small RNAs, such as 5S rRNA and tRNAs, respectively. Pol II is the central component of the basal RNA polymerase II transcription machinery. Pols are composed of mobile elements that move relative to each other. In Pol II, RBP10 is part of the core element with the central large cleft. The sequence is that of DNA-directed RNA polymerases I, II, and III subunit RPABC5 from Caenorhabditis briggsae.